Consider the following 571-residue polypeptide: Hemagglutinin-neuraminidase (571 aa).

The Intravirion portion of the chain corresponds to 1-25; that stretch reads MEDYSNLSLKSIPKRTCRIIFRTAT. Residues 26–46 form a helical membrane-spanning segment; sequence ILGICTLIVLCSSILHEIIHL. Residues 47–571 are Virion surface-facing; sequence DVSSGLMDSD…IIPFLRELIP (525 aa). 3 cysteine pairs are disulfide-bonded: C166-C190, C180-C241, and C232-C245. The segment at 228–233 is important for neuraminidase activity; the sequence is NRKSCS. The segment at 228 to 233 is involved in neuraminidase activity; that stretch reads NRKSCS. Residues N272, N284, N335, and N341 are each glycosylated (N-linked (GlcNAc...) asparagine; by host). Cystine bridges form between C338/C459, C370/C380, and C453/C463. N386 carries N-linked (GlcNAc...) asparagine; by host glycosylation. Residues 393–398 form a sialic receptor-binding site region; that stretch reads GAEGRL. N-linked (GlcNAc...) asparagine; by host glycans are attached at residues N454, N498, N501, N517, and N522. C535 and C546 are oxidised to a cystine.

Belongs to the paramyxoviruses hemagglutinin-neuraminidase family. As to quaternary structure, homotetramer; composed of disulfide-linked homodimers. Interacts with F protein trimer.

It localises to the virion membrane. Its subcellular location is the host cell membrane. It catalyses the reaction Hydrolysis of alpha-(2-&gt;3)-, alpha-(2-&gt;6)-, alpha-(2-&gt;8)- glycosidic linkages of terminal sialic acid residues in oligosaccharides, glycoproteins, glycolipids, colominic acid and synthetic substrates.. Its function is as follows. Attaches the virus to sialic acid-containing cell receptors and thereby initiating infection. Binding of HN protein to the receptor induces a conformational change that allows the F protein to trigger virion/cell membranes fusion. Neuraminidase activity ensures the efficient spread of the virus by dissociating the mature virions from the neuraminic acid containing glycoproteins. The sequence is that of Hemagglutinin-neuraminidase (HN) from Human parainfluenza 2 virus (strain Toshiba) (HPIV-2).